Reading from the N-terminus, the 202-residue chain is Small ribosomal subunit protein uS4c (202 aa).

The 61-residue stretch at 90–150 folds into the S4 RNA-binding domain; it reads MRLDNVIFRL…NQRKSQAIIN (61 aa).

It belongs to the universal ribosomal protein uS4 family. As to quaternary structure, part of the 30S ribosomal subunit. Contacts protein S5. The interaction surface between S4 and S5 is involved in control of translational fidelity.

It localises to the plastid. The protein resides in the chloroplast. Its function is as follows. One of the primary rRNA binding proteins, it binds directly to 16S rRNA where it nucleates assembly of the body of the 30S subunit. Functionally, with S5 and S12 plays an important role in translational accuracy. The chain is Small ribosomal subunit protein uS4c (rps4) from Canalohypopterygium tamariscinum (Moss).